The primary structure comprises 165 residues: Nucleotide-binding protein P9515_05441 (165 aa).

This sequence belongs to the YajQ family.

In terms of biological role, nucleotide-binding protein. This chain is Nucleotide-binding protein P9515_05441, found in Prochlorococcus marinus (strain MIT 9515).